The primary structure comprises 397 residues: 8-amino-7-oxononanoate synthase (397 aa).

Substrate is bound at residue Arg-23. 110-111 (GY) is a binding site for pyridoxal 5'-phosphate. His-135 is a binding site for substrate. The pyridoxal 5'-phosphate site is built by Ser-181, His-209, and Thr-237. Position 240 is an N6-(pyridoxal phosphate)lysine (Lys-240). Position 354 (Thr-354) interacts with substrate.

It belongs to the class-II pyridoxal-phosphate-dependent aminotransferase family. BioF subfamily. In terms of assembly, homodimer. It depends on pyridoxal 5'-phosphate as a cofactor.

It carries out the reaction 6-carboxyhexanoyl-[ACP] + L-alanine + H(+) = (8S)-8-amino-7-oxononanoate + holo-[ACP] + CO2. It functions in the pathway cofactor biosynthesis; biotin biosynthesis. Functionally, catalyzes the decarboxylative condensation of pimeloyl-[acyl-carrier protein] and L-alanine to produce 8-amino-7-oxononanoate (AON), [acyl-carrier protein], and carbon dioxide. The polypeptide is 8-amino-7-oxononanoate synthase (Anaeromyxobacter sp. (strain Fw109-5)).